The sequence spans 452 residues: Putrescine hydroxycinnamoyltransferase (452 aa).

The active-site Proton acceptor is the H151. The segment at 213–234 (PAAGVDGDVGGDHKQQHGHGGE) is disordered. Over residues 222 to 234 (GGDHKQQHGHGGE) the composition is skewed to basic and acidic residues. The active-site Proton acceptor is D398.

Belongs to the plant acyltransferase family. In terms of tissue distribution, highly expressed in roots. Expressed at low levels in flowers.

Hydroxycinnamoyl transferase that catalyzes the transfer of an acyl from p-coumaryol-CoA to putrescine, to produce coumaroyl putrescine. Can use feruloyl-CoA, caffeoyl-CoA and sinapoyl-CoA as acyl donors. Seems to be able to transfer the acyl group from feruloyl-CoA to the acyl acceptors agmatine and spermidine. This is Putrescine hydroxycinnamoyltransferase from Oryza sativa subsp. japonica (Rice).